Here is a 198-residue protein sequence, read N- to C-terminus: Recombination protein RecR (198 aa).

The segment at Cys-57–Cys-72 adopts a C4-type zinc-finger fold. The 95-residue stretch at Ser-80–Pro-174 folds into the Toprim domain.

It belongs to the RecR family.

Its function is as follows. May play a role in DNA repair. It seems to be involved in an RecBC-independent recombinational process of DNA repair. It may act with RecF and RecO. This is Recombination protein RecR from Pseudomonas paraeruginosa (strain DSM 24068 / PA7) (Pseudomonas aeruginosa (strain PA7)).